The primary structure comprises 160 residues: Small ribosomal subunit protein uS7 (160 aa).

This sequence belongs to the universal ribosomal protein uS7 family. As to quaternary structure, part of the 30S ribosomal subunit. Contacts proteins S9 and S11.

One of the primary rRNA binding proteins, it binds directly to 16S rRNA where it nucleates assembly of the head domain of the 30S subunit. Is located at the subunit interface close to the decoding center, probably blocks exit of the E-site tRNA. The protein is Small ribosomal subunit protein uS7 of Rickettsia rickettsii (strain Iowa).